The following is an 804-amino-acid chain: Lon protease (804 aa).

The segment at 1–23 is disordered; it reads MSADSENETSESSPAGEATASTS. The Lon N-terminal domain maps to 30 to 224; it reads LILLPVRNAV…KVLDAVAGRI (195 aa). 376–383 serves as a coordination point for ATP; sequence GPPGVGKT. Residues 612-793 enclose the Lon proteolytic domain; that stretch reads TSLPGVVTGL…DDAVREIIED (182 aa). Active-site residues include S699 and K742.

This sequence belongs to the peptidase S16 family. Homohexamer. Organized in a ring with a central cavity.

Its subcellular location is the cytoplasm. It catalyses the reaction Hydrolysis of proteins in presence of ATP.. In terms of biological role, ATP-dependent serine protease that mediates the selective degradation of mutant and abnormal proteins as well as certain short-lived regulatory proteins. Required for cellular homeostasis and for survival from DNA damage and developmental changes induced by stress. Degrades polypeptides processively to yield small peptide fragments that are 5 to 10 amino acids long. Binds to DNA in a double-stranded, site-specific manner. This is Lon protease from Paraburkholderia phytofirmans (strain DSM 17436 / LMG 22146 / PsJN) (Burkholderia phytofirmans).